The following is a 402-amino-acid chain: MEVDKKDEREAESSEQVVNPWEVSAKDGGKIDYDKLIDKFGCQRLDESLIDRVQRLTSRQPHVFLRRSVFFAHRDFNEILDAYERGDKFYLYTGRGPSSEALHLGHLIPFMFTKYLQEAFKVPLVIQLTDDEKSIWKNLSVEESQRLARENAKDIIACGFDVTKTFIFSDFDYVGGAFYKNMVKVGKCVTLNKAMGIFGFSGEDPIAKLSFPPVQAVPSFPSSFPHLFPGKDNLRCLIPCAIDQDPYFRMTRDVAPRLGYSKPALIESTFFPALQGENGKMSASDPNSAIYVTDSAKDIKNKINRYAFSGGQDSIEKHRELGANLEVDIPVKYLSFFLEDDSELEHIKKEYGEGRMLTGEVKKRLTEVLTEIVERHRRARAAVTDEMVDAFMAVRPLPSMFE.

The 'HIGH' region signature appears at 97–106 (PSSEALHLGH). A 'KMSKS' region motif is present at residues 280-284 (KMSAS).

Belongs to the class-I aminoacyl-tRNA synthetase family.

The protein resides in the cytoplasm. It is found in the cytosol. It carries out the reaction tRNA(Trp) + L-tryptophan + ATP = L-tryptophyl-tRNA(Trp) + AMP + diphosphate + H(+). The sequence is that of Tryptophan--tRNA ligase, cytoplasmic from Arabidopsis thaliana (Mouse-ear cress).